Consider the following 325-residue polypeptide: Beta-lactamase 1 (325 aa).

The N-terminal stretch at 1-26 is a signal peptide; sequence MRIRPTRRLLLGAVAPLALVPLVACG. Residues 30-50 are disordered; it reads GSESGQQPGLGGCGTSAHGSA. The active-site Acyl-ester intermediate is the Ser93. Substrate is bound at residue 270-272; that stretch reads KSG.

Belongs to the class-A beta-lactamase family.

It carries out the reaction a beta-lactam + H2O = a substituted beta-amino acid. In Streptomyces cacaoi, this protein is Beta-lactamase 1 (blaL).